The chain runs to 396 residues: Elongation factor Tu 2 (396 aa).

Residues 10–206 (KPHVNVGTIG…AIDSYIPEPE (197 aa)) form the tr-type G domain. Residues 19-26 (GHIDHGKT) are G1. A GTP-binding site is contributed by 19-26 (GHIDHGKT). Thr-26 serves as a coordination point for Mg(2+). Residues 60-64 (GITIA) are G2. The tract at residues 81–84 (DCPG) is G3. Residues 81 to 85 (DCPGH) and 136 to 139 (NKCD) each bind GTP. The G4 stretch occupies residues 136–139 (NKCD). Positions 174–176 (SAL) are G5.

Belongs to the TRAFAC class translation factor GTPase superfamily. Classic translation factor GTPase family. EF-Tu/EF-1A subfamily. In terms of assembly, monomer.

Its subcellular location is the cytoplasm. It carries out the reaction GTP + H2O = GDP + phosphate + H(+). Functionally, GTP hydrolase that promotes the GTP-dependent binding of aminoacyl-tRNA to the A-site of ribosomes during protein biosynthesis. The protein is Elongation factor Tu 2 of Desulfotalea psychrophila (strain LSv54 / DSM 12343).